The primary structure comprises 215 residues: L-fuculose phosphate aldolase (215 aa).

Residues 28–29 (GN), 43–44 (TG), and 71–72 (SS) each bind substrate. E73 serves as the catalytic Proton donor/acceptor. E73, H92, H94, and H155 together coordinate Zn(2+).

This sequence belongs to the aldolase class II family. AraD/FucA subfamily. In terms of assembly, homotetramer. The cofactor is Zn(2+).

It carries out the reaction L-fuculose 1-phosphate = (S)-lactaldehyde + dihydroxyacetone phosphate. It functions in the pathway carbohydrate degradation; L-fucose degradation; L-lactaldehyde and glycerone phosphate from L-fucose: step 3/3. With respect to regulation, inhibited by phosphoglycolohydroxamate (PGH). In terms of biological role, involved in the degradation of L-fucose and D-arabinose. Catalyzes the reversible cleavage of L-fuculose 1-phosphate (Fuc1P) to yield dihydroxyacetone phosphate (DHAP) and L-lactaldehyde. Also able to catalyze the reversible cleavage of D-ribulose 1-phosphate, but FucA has a higher affinity for L-fuculose 1-phosphate and L-lactaldehyde than for D-ribulose 1-phosphate and glycolaldehyde, respectively. FucA possesses a high specificity for the dihydroxyacetone phosphate (DHAP), but accepts a great variety of different aldehydes and has a strong preference for L-configurated alpha-hydroxy aldehydes. FucA generates a vicinal diol unit having the absolute (3R,4R)-cis configuration (D-erythro). This is L-fuculose phosphate aldolase from Escherichia coli (strain K12).